Here is a 295-residue protein sequence, read N- to C-terminus: sn-glycerol-3-phosphate transport system permease protein UgpA (295 aa).

Residues 1-11 are Cytoplasmic-facing; sequence MSSSRPVFRSR. A helical membrane pass occupies residues 12 to 32; the sequence is WLPYLLVAPQLIITVIFFIWP. At 33 to 80 the chain is on the periplasmic side; sequence AGEALWYSLQSVDPFGFSSQFVGLDNFVTLFHDSYYLDAFWTTIKFST. The ABC transmembrane type-1 domain maps to 76–284; it reads IKFSTFVTVS…FLVIVLTVVQ (209 aa). The helical transmembrane segment at 81–101 threads the bilayer; it reads FVTVSGLLVSLFFAALVEYIV. The Cytoplasmic portion of the chain corresponds to 102–109; that stretch reads RGSRFYQT. Residues 110 to 130 traverse the membrane as a helical segment; it reads LMLLPYAVAPAVAAVLWIFLF. The Periplasmic portion of the chain corresponds to 131 to 156; sequence NPGRGLITHFLAEFGYDWNHAQNSGQ. Residues 157 to 177 form a helical membrane-spanning segment; that stretch reads AMFLVVFASVWKQISYNFLFF. The Cytoplasmic segment spans residues 178-207; the sequence is YAALQSIPRSLIEAAAIDGAGPIRRFFKIA. A helical transmembrane segment spans residues 208–228; it reads LPLIAPVSFFLLVVNLVYAFF. Residues 229–262 lie on the Periplasmic side of the membrane; the sequence is DTFPVIDAATSGGPVQATTTLIYKIYREGFTGLD. Residues 263–283 traverse the membrane as a helical segment; sequence LASSAAQSVVLMFLVIVLTVV. The Cytoplasmic portion of the chain corresponds to 284–295; sequence QFRYVEGKVRYQ.

This sequence belongs to the binding-protein-dependent transport system permease family. UgpAE subfamily. The complex is composed of two ATP-binding proteins (UgpC), two transmembrane proteins (UgpA and UgpE) and a solute-binding protein (UgpB).

It is found in the cell inner membrane. Its function is as follows. Part of the ABC transporter complex UgpBAEC involved in sn-glycerol-3-phosphate (G3P) import. Probably responsible for the translocation of the substrate across the membrane. The protein is sn-glycerol-3-phosphate transport system permease protein UgpA (ugpA) of Escherichia coli O6:K15:H31 (strain 536 / UPEC).